The following is a 500-amino-acid chain: Probable malate:quinone oxidoreductase (500 aa).

Belongs to the MQO family. It depends on FAD as a cofactor.

It catalyses the reaction (S)-malate + a quinone = a quinol + oxaloacetate. Its pathway is carbohydrate metabolism; tricarboxylic acid cycle; oxaloacetate from (S)-malate (quinone route): step 1/1. This chain is Probable malate:quinone oxidoreductase, found in Bacillus cytotoxicus (strain DSM 22905 / CIP 110041 / 391-98 / NVH 391-98).